Reading from the N-terminus, the 852-residue chain is Envelope glycoprotein gp160 (852 aa).

An N-terminal signal peptide occupies residues 1 to 31 (MRARETRKNYQCLWRWGTMLLGMLMICSAAE). Residues 32-680 (NLWVTVYYGV…ITNWLWYIRI (649 aa)) are Extracellular-facing. An intrachain disulfide couples Cys-53 to Cys-73. N-linked (GlcNAc...) asparagine; by host glycans are attached at residues Asn-87, Asn-129, Asn-136, Asn-141, Asn-142, Asn-155, Asn-159, Asn-189, and Asn-198. 5 disulfide bridges follow: Cys-118-Cys-206, Cys-125-Cys-197, Cys-130-Cys-156, Cys-219-Cys-248, and Cys-229-Cys-240. The segment at 130 to 155 (CTDYLGNATNTNNSSGGTVEKEEIKN) is V1. Residues 156–197 (CSFNITTGIRDKVQKAYAYFYKLDVVPIDDDNTNTSYRLIHC) form a V2 region. 5 N-linked (GlcNAc...) asparagine; by host glycosylation sites follow: Asn-242, Asn-263, Asn-277, Asn-290, and Asn-296. The segment at 297 to 330 (CTRPNNNRRRRITSGPGKVLYTTGEIIGDIRKAY) is V3. The cysteines at positions 297 and 331 are disulfide-linked. N-linked (GlcNAc...) asparagine; by host glycans are attached at residues Asn-332, Asn-339, and Asn-355. Positions 363 to 373 (SSGGDPEIVMH) are CD4-binding loop. 2 disulfides stabilise this stretch: Cys-377–Cys-439 and Cys-384–Cys-412. Positions 384–412 (CNTTKLFNSTWNENSTWNATGNDTITLPC) are V4. N-linked (GlcNAc...) asparagine; by host glycans are attached at residues Asn-385, Asn-391, Asn-397, Asn-401, Asn-405, Asn-442, and Asn-457. 2 V5 regions span residues 455–466 (DKNSTTEIFRPA) and 457–466 (NSTTEIFRPA). Residues 507–528 (AVGVIGAMFLGFLGAAGSTMGA) form a fusion peptide region. Positions 570 to 588 (KQLQARVLAVERYLRDQQL) are immunosuppression. Cys-594 and Cys-600 are disulfide-bonded. N-linked (GlcNAc...) asparagine; by host glycosylation is found at Asn-607, Asn-612, Asn-621, and Asn-633. Residues 629–663 (REIDNYTSLIYTLLEESQNQQEKNEQELLELDKWA) are a coiled coil. The tract at residues 658-679 (ELDKWASLWNWFSITNWLWYIR) is MPER; binding to GalCer. The helical transmembrane segment at 681–701 (FIMIVGGLIGLRIIFAVLSIV) threads the bilayer. Over 702-852 (NRVRQGYSPL…IRQGFERALL (151 aa)) the chain is Cytoplasmic. Residues 708–711 (YSPL) carry the YXXL motif; contains endocytosis signal motif. The interval 717-739 (IPAQRGPDRPEGIEEGGGERDRD) is disordered. Residues 722 to 739 (GPDRPEGIEEGGGERDRD) are compositionally biased toward basic and acidic residues. A lipid anchor (S-palmitoyl cysteine; by host) is attached at Cys-760. Positions 851 to 852 (LL) match the Di-leucine internalization motif motif.

This sequence belongs to the HIV-1 env protein family. In terms of assembly, the mature envelope protein (Env) consists of a homotrimer of non-covalently associated gp120-gp41 heterodimers. The resulting complex protrudes from the virus surface as a spike. There seems to be as few as 10 spikes on the average virion. Interacts with host CD4, CCR5 and CXCR4. Gp120 also interacts with the C-type lectins CD209/DC-SIGN and CLEC4M/DC-SIGNR (collectively referred to as DC-SIGN(R)). Gp120 and gp41 interact with GalCer. Gp120 interacts with host ITGA4/ITGB7 complex; on CD4+ T-cells, this interaction results in rapid activation of integrin ITGAL/LFA-1, which facilitates efficient cell-to-cell spreading of HIV-1. Gp120 interacts with cell-associated heparan sulfate; this interaction increases virus infectivity on permissive cells and may be involved in infection of CD4- cells. The mature envelope protein (Env) consists of a homotrimer of non-covalently associated gp120-gp41 heterodimers. The resulting complex protrudes from the virus surface as a spike. There seems to be as few as 10 spikes on the average virion. Highly glycosylated by host. The high number of glycan on the protein is reffered to as 'glycan shield' because it contributes to hide protein sequence from adaptive immune system. In terms of processing, palmitoylation of the transmembrane protein and of Env polyprotein (prior to its proteolytic cleavage) is essential for their association with host cell membrane lipid rafts. Palmitoylation is therefore required for envelope trafficking to classical lipid rafts, but not for viral replication. Post-translationally, specific enzymatic cleavages in vivo yield mature proteins. Envelope glycoproteins are synthesized as an inactive precursor that is heavily N-glycosylated and processed likely by host cell furin in the Golgi to yield the mature SU and TM proteins. The cleavage site between SU and TM requires the minimal sequence [KR]-X-[KR]-R. About 2 of the 9 disulfide bonds of gp41 are reduced by P4HB/PDI, following binding to CD4 receptor.

It is found in the virion membrane. The protein localises to the host cell membrane. Its subcellular location is the host endosome membrane. In terms of biological role, oligomerizes in the host endoplasmic reticulum into predominantly trimers. In a second time, gp160 transits in the host Golgi, where glycosylation is completed. The precursor is then proteolytically cleaved in the trans-Golgi and thereby activated by cellular furin or furin-like proteases to produce gp120 and gp41. Functionally, attaches the virus to the host lymphoid cell by binding to the primary receptor CD4. This interaction induces a structural rearrangement creating a high affinity binding site for a chemokine coreceptor like CXCR4 and/or CCR5. Acts as a ligand for CD209/DC-SIGN and CLEC4M/DC-SIGNR, which are respectively found on dendritic cells (DCs), and on endothelial cells of liver sinusoids and lymph node sinuses. These interactions allow capture of viral particles at mucosal surfaces by these cells and subsequent transmission to permissive cells. HIV subverts the migration properties of dendritic cells to gain access to CD4+ T-cells in lymph nodes. Virus transmission to permissive T-cells occurs either in trans (without DCs infection, through viral capture and transmission), or in cis (following DCs productive infection, through the usual CD4-gp120 interaction), thereby inducing a robust infection. In trans infection, bound virions remain infectious over days and it is proposed that they are not degraded, but protected in non-lysosomal acidic organelles within the DCs close to the cell membrane thus contributing to the viral infectious potential during DCs' migration from the periphery to the lymphoid tissues. On arrival at lymphoid tissues, intact virions recycle back to DCs' cell surface allowing virus transmission to CD4+ T-cells. Its function is as follows. Acts as a class I viral fusion protein. Under the current model, the protein has at least 3 conformational states: pre-fusion native state, pre-hairpin intermediate state, and post-fusion hairpin state. During fusion of viral and target intracellular membranes, the coiled coil regions (heptad repeats) assume a trimer-of-hairpins structure, positioning the fusion peptide in close proximity to the C-terminal region of the ectodomain. The formation of this structure appears to drive apposition and subsequent fusion of viral and target cell membranes. Complete fusion occurs in host cell endosomes and is dynamin-dependent, however some lipid transfer might occur at the plasma membrane. The virus undergoes clathrin-dependent internalization long before endosomal fusion, thus minimizing the surface exposure of conserved viral epitopes during fusion and reducing the efficacy of inhibitors targeting these epitopes. Membranes fusion leads to delivery of the nucleocapsid into the cytoplasm. The chain is Envelope glycoprotein gp160 from Human immunodeficiency virus type 1 group M subtype B (isolate SF33) (HIV-1).